We begin with the raw amino-acid sequence, 548 residues long: C-type lectin domain family 4 member F (548 aa).

At 1–42 the chain is on the cytoplasmic side; sequence MKEAELNRDMARYCTDNQCVSLQPQGLGPKSAALMAPRTLRH. A helical; Signal-anchor for type II membrane protein membrane pass occupies residues 43 to 69; the sequence is VQVILALMVVTVIFSLLALFVVASQPW. Residues 70-548 are Extracellular-facing; the sequence is RPEWNKEPPS…STGWSAARVG (479 aa). N-linked (GlcNAc...) asparagine glycans are attached at residues N86, N92, N115, N132, N209, and N255. The 101-residue stretch at 438–538 folds into the C-type lectin domain; the sequence is KFCTSQGAHL…GSSYPWVCKK (101 aa). Cystine bridges form between C440–C536 and C516–C528.

Kupffer cells.

The protein localises to the membrane. In terms of biological role, receptor with an affinity for galactose and fucose. Could be involved in endocytosis. The polypeptide is C-type lectin domain family 4 member F (Clec4f) (Mus musculus (Mouse)).